The following is a 63-amino-acid chain: UPF0434 protein BAV2101 (63 aa).

It belongs to the UPF0434 family.

The protein is UPF0434 protein BAV2101 of Bordetella avium (strain 197N).